A 128-amino-acid chain; its full sequence is Translation initiation factor 5A (128 aa).

Lys35 is modified (hypusine).

This sequence belongs to the eIF-5A family.

It localises to the cytoplasm. Functions by promoting the formation of the first peptide bond. This is Translation initiation factor 5A (eIF5A) from Methanocella arvoryzae (strain DSM 22066 / NBRC 105507 / MRE50).